The primary structure comprises 167 residues: Protein-export protein SecB (167 aa).

Belongs to the SecB family. In terms of assembly, homotetramer, a dimer of dimers. One homotetramer interacts with 1 SecA dimer.

The protein localises to the cytoplasm. One of the proteins required for the normal export of preproteins out of the cell cytoplasm. It is a molecular chaperone that binds to a subset of precursor proteins, maintaining them in a translocation-competent state. It also specifically binds to its receptor SecA. The protein is Protein-export protein SecB of Idiomarina loihiensis (strain ATCC BAA-735 / DSM 15497 / L2-TR).